Consider the following 338-residue polypeptide: Glyceraldehyde-3-phosphate dehydrogenase, cytosolic (338 aa).

NAD(+) contacts are provided by residues 14 to 15 (RI), Asp-36, and Arg-83. Residues 154–156 (SCT), Thr-185, 214–215 (TG), and Arg-237 each bind D-glyceraldehyde 3-phosphate. Cys-155 serves as the catalytic Nucleophile. Position 319 (Asn-319) interacts with NAD(+).

Belongs to the glyceraldehyde-3-phosphate dehydrogenase family. As to quaternary structure, homotetramer.

The protein resides in the cytoplasm. The enzyme catalyses D-glyceraldehyde 3-phosphate + phosphate + NAD(+) = (2R)-3-phospho-glyceroyl phosphate + NADH + H(+). It participates in carbohydrate degradation; glycolysis; pyruvate from D-glyceraldehyde 3-phosphate: step 1/5. Key enzyme in glycolysis that catalyzes the first step of the pathway by converting D-glyceraldehyde 3-phosphate (G3P) into 3-phospho-D-glyceroyl phosphate. Essential for the maintenance of cellular ATP levels and carbohydrate metabolism. This Ranunculus acris (Meadow buttercup) protein is Glyceraldehyde-3-phosphate dehydrogenase, cytosolic (GAPC).